Consider the following 573-residue polypeptide: Solute carrier family 41 member 2 (573 aa).

At 1-162 (MTNCKGRSTI…KESSSIMALQ (162 aa)) the chain is on the extracellular side. A helical transmembrane segment spans residues 163-183 (ILVPFLLAGFGTVTAGMVLDI). At 184–195 (VQHWDVFKNVTE) the chain is on the cytoplasmic side. A helical transmembrane segment spans residues 196–216 (VFILVPALLGLKGNLEMTLAS). The Extracellular segment spans residues 217–245 (RLSTAVNIGKMDSPIEKWNLIIGNLALKQ). The chain crosses the membrane as a helical span at residues 246–266 (VQATVVGFLAAVAAVILGWIP). Over 267-282 (EGKYSFSHSILLCSSS) the chain is Cytoplasmic. Residues 283-303 (VATAFIASLLQGIIMVGVIVG) traverse the membrane as a helical segment. The Extracellular segment spans residues 304-313 (SKKTGINPDN). The helical transmembrane segment at 314-334 (VATPIAASFGDLITLAILAWI) threads the bilayer. Over 335-347 (SQGLYTCLETYYY) the chain is Cytoplasmic. A helical transmembrane segment spans residues 348 to 368 (VSPLVGAFFLALTPMGIVIAA). The Extracellular portion of the chain corresponds to 369-376 (KHPATRTV). A helical membrane pass occupies residues 377-397 (LHSGWEPVITAMIISSIGGLI). Over 398 to 406 (LDTTVSDPN) the chain is Cytoplasmic. Residues 407–427 (LVGIVVYTPVINGIGGNLVAI) traverse the membrane as a helical segment. Topologically, residues 428–469 (QASRISTYLHLHSIPGELPEEAKGCYYPCRTYYGTGVNNKSA) are extracellular. The helical transmembrane segment at 470–490 (QVLLLLVIPGHLIFLYTIHLM) threads the bilayer. At 491–499 (KSGHTSLTP) the chain is on the cytoplasmic side. A helical transmembrane segment spans residues 500–520 (IFIAVYLFAALLQVFTLLWIA). The Extracellular segment spans residues 521-543 (DWMVHHFWKKGKDPDSFSIPYLT). Residues 544–564 (ALGDLLGTALLAVGFHFLWLI) form a helical membrane-spanning segment. The Cytoplasmic segment spans residues 565 to 573 (GDRDGDVGD).

It belongs to the SLC41A transporter family.

It is found in the cell membrane. It catalyses the reaction Mg(2+)(in) = Mg(2+)(out). The catalysed reaction is Mn(2+)(in) = Mn(2+)(out). It carries out the reaction Co(2+)(in) = Co(2+)(out). The enzyme catalyses Ni(2+)(in) = Ni(2+)(out). It catalyses the reaction Fe(2+)(in) = Fe(2+)(out). Its function is as follows. Acts as a plasma-membrane magnesium transporter. Can also mediate the transport of other divalent metal cations in an order of Ba(2+) &gt; Ni(2+) &gt; Co(2+) &gt; Fe(2+) &gt; Mn(2+). The chain is Solute carrier family 41 member 2 (SLC41A2) from Gallus gallus (Chicken).